We begin with the raw amino-acid sequence, 461 residues long: Kynurenine 3-monooxygenase (461 aa).

2 helical membrane passes run 395-415 (GFMN…VTFT) and 432-452 (ILSN…AIGI).

Belongs to the aromatic-ring hydroxylase family. KMO subfamily. It depends on FAD as a cofactor.

Its subcellular location is the mitochondrion. The protein resides in the membrane. The enzyme catalyses L-kynurenine + NADPH + O2 + H(+) = 3-hydroxy-L-kynurenine + NADP(+) + H2O. Its pathway is cofactor biosynthesis; NAD(+) biosynthesis; quinolinate from L-kynurenine: step 1/3. Functionally, catalyzes the hydroxylation of L-kynurenine (L-Kyn) to form 3-hydroxy-L-kynurenine (L-3OHKyn). Required for synthesis of quinolinic acid. This is Kynurenine 3-monooxygenase from Caenorhabditis briggsae.